A 507-amino-acid polypeptide reads, in one-letter code: ATP synthase subunit alpha, chloroplastic (507 aa).

170–177 is a binding site for ATP; the sequence is GDRQTGKT.

The protein belongs to the ATPase alpha/beta chains family. As to quaternary structure, F-type ATPases have 2 components, CF(1) - the catalytic core - and CF(0) - the membrane proton channel. CF(1) has five subunits: alpha(3), beta(3), gamma(1), delta(1), epsilon(1). CF(0) has four main subunits: a, b, b' and c.

The protein localises to the plastid. It is found in the chloroplast thylakoid membrane. It carries out the reaction ATP + H2O + 4 H(+)(in) = ADP + phosphate + 5 H(+)(out). In terms of biological role, produces ATP from ADP in the presence of a proton gradient across the membrane. The alpha chain is a regulatory subunit. The chain is ATP synthase subunit alpha, chloroplastic from Gossypium hirsutum (Upland cotton).